The sequence spans 520 residues: Cell division control protein 3 (520 aa).

The segment covering 1-24 has biased composition (basic and acidic residues); the sequence is MSLKEEQVSIKQDPEQEERQHDQF. The segment at 1–83 is disordered; sequence MSLKEEQVSI…SSQSEKGQVL (83 aa). At Ser-2 the chain carries N-acetylserine. The residue at position 2 (Ser-2) is a Phosphoserine. Residue Lys-4 forms a Glycyl lysine isopeptide (Lys-Gly) (interchain with G-Cter in SUMO) linkage. Ser-9 is subject to Phosphoserine. Residues Lys-11 and Lys-30 each participate in a glycyl lysine isopeptide (Lys-Gly) (interchain with G-Cter in SUMO) cross-link. Thr-47 carries the phosphothreonine modification. A compositionally biased stretch (basic and acidic residues) spans 51 to 64; it reads DSERFEAAESDVKV. Ser-60 is subject to Phosphoserine. A Glycyl lysine isopeptide (Lys-Gly) (interchain with G-Cter in SUMO) cross-link involves residue Lys-63. At Ser-77 the chain carries Phosphoserine. A Septin-type G domain is found at 116–411; that stretch reads NGFSFNLLCV…ENYRSSKLAK (296 aa). Positions 126–133 are G1 motif; that stretch reads GPDGIGKT. GTP is bound at residue 126–133; the sequence is GPDGIGKT. Acidic residues predominate over residues 156–167; that stretch reads ELANDQEEEEGQ. A disordered region spans residues 156–181; the sequence is ELANDQEEEEGQGEGHENQSQEQRHK. The segment covering 168–179 has biased composition (basic and acidic residues); it reads GEGHENQSQEQR. Ser-175 bears the Phosphoserine mark. Residues 204–207 form a G3 motif region; sequence DTEG. Residues Gly-207, 287 to 295, Gly-344, and Arg-360 each bind GTP; that span reads KSDILTDEE. The tract at residues 286–289 is G4 motif; the sequence is AKSD. Residue Lys-287 forms a Glycyl lysine isopeptide (Lys-Gly) (interchain with G-Cter in SUMO) linkage. Residues 427–508 adopt a coiled-coil conformation; sequence ISKQQEEKTL…INSASPNVNH (82 aa). Thr-468 is modified (phosphothreonine). Residues 496–520 are disordered; sequence ELSINSASPNVNHSPVPTKKKGFLR. Polar residues predominate over residues 497–510; that stretch reads LSINSASPNVNHSP. Ser-509 is subject to Phosphoserine.

The protein belongs to the TRAFAC class TrmE-Era-EngA-EngB-Septin-like GTPase superfamily. Septin GTPase family. As to quaternary structure, component of the septin complex which consists of CDC3, CDC10, CDC11, CDC12 and probably SHS1 and rearranges to a cortical collar of highly ordered filaments at the mother-bud-neck. A complex formed by CDC3, CDC10, CDC11 and CDC12 is capable of forming long filaments in vitro and the components seem to be present in a 2:2:2:2 arrangement in vivo. The filaments are proposed to be formed by the end-to-end polymerization of CDC3-CDC12-CDC11 complexes with CDC10 serving as a bridge to bundle the polymers into paired filaments. Component of the GIN4 complex composed of at least BNI5, CDC3, CDC10, CDC11, CDC12, GIN4, NAP1 and SHS1. Self-associates. Interacts with SIZ1 and SYP1. In terms of processing, phosphorylated by CDC28. Phosphorylation at the end of G1 may facilitate initiation of a new cell cycle by promoting disassembly of the obsolete septin ring from the previous cell cycle. Post-translationally, sumoylated during mitosis on the mother cell side of the bud neck by UBC9/SIZ1. Sumoylation probably plays a central role in regulating septin ring disassembly during the cell cycle.

Its subcellular location is the membrane. The protein localises to the bud neck. Functionally, septins are GTPases involved in cytokinesis that assemble early in the cell cycle as a patch at the incipient bud site and form a ring approximate 15 minutes before bud emergence, which transforms into an hour-glass shaped collar of cortical filaments that spans both sides of the mother-bud neck. This collar persists until just before cytokinesis, when it splits into two rings that occupy opposite sides of the neck. The septins at the bud neck serve as a structural scaffold that recruits different components involved in diverse processes at specific stages during the cell cycle. Many proteins bind asymmetrically to the septin collar. The septin assembly is regulated by protein kinases GIN4 and/or CLA4. May act by recruiting MYO1 and HOF1, a protein involved in septation, to the site of cleavage. Septins are also involved in cell morphogenesis, bud site selection, chitin deposition, cell cycle regulation, cell compartmentalization and spore wall formation. The protein is Cell division control protein 3 (CDC3) of Saccharomyces cerevisiae (strain ATCC 204508 / S288c) (Baker's yeast).